The primary structure comprises 699 residues: Zinc finger protein 782 (699 aa).

Residues 8–79 (VSFQDVTVEF…EKEKGFLSRN (72 aa)) form the KRAB domain. A disordered region spans residues 75–95 (FLSRNSPEDSQPDEISEKSPE). The segment at 279-307 (CFCRITHKTLTGGKSFSQKSHIREHHRVH) adopts a C2H2-type 1; degenerate zinc-finger fold. The segment at 316–332 (GKSFNRNSTLPVHQRTH) adopts a C2H2-type 2; degenerate zinc-finger fold. Residues 337–360 (YSDYHPCTETFSYQSTFSVHQKVH) form a C2H2-type 3; degenerate zinc finger. A C2H2-type 4; degenerate zinc finger spans residues 366–388 (YEYNECGKSCSMNSHLIWPQKSH). 11 C2H2-type zinc fingers span residues 394 to 416 (YECP…QRTH), 422 to 444 (YKCD…QRTH), 450 to 472 (FECH…QRTH), 478 to 500 (FECN…RRTH), 506 to 528 (YKCD…HRTH), 534 to 556 (YKCN…HRIH), 562 to 584 (YKCN…HRTH), 590 to 612 (YQCE…QRTH), 618 to 640 (YECN…QRTH), 646 to 668 (YNCN…QRTH), and 674 to 696 (YKCD…QKAH).

This sequence belongs to the krueppel C2H2-type zinc-finger protein family.

It is found in the nucleus. Its function is as follows. May be involved in transcriptional regulation. In Homo sapiens (Human), this protein is Zinc finger protein 782 (ZNF782).